The following is a 157-amino-acid chain: Phosphopantetheine adenylyltransferase (157 aa).

Ser9 contributes to the substrate binding site. Residues Ser9–Phe10 and His17 each bind ATP. Substrate is bound by residues Lys41, Thr73, and Arg87. ATP contacts are provided by residues Gly88–Arg90, Glu98, and Tyr122–Ser128.

This sequence belongs to the bacterial CoaD family. Homohexamer. Mg(2+) serves as cofactor.

It is found in the cytoplasm. The enzyme catalyses (R)-4'-phosphopantetheine + ATP + H(+) = 3'-dephospho-CoA + diphosphate. Its pathway is cofactor biosynthesis; coenzyme A biosynthesis; CoA from (R)-pantothenate: step 4/5. Reversibly transfers an adenylyl group from ATP to 4'-phosphopantetheine, yielding dephospho-CoA (dPCoA) and pyrophosphate. This chain is Phosphopantetheine adenylyltransferase, found in Oenococcus oeni (strain ATCC BAA-331 / PSU-1).